A 645-amino-acid polypeptide reads, in one-letter code: Cell pattern formation-associated protein stuA (645 aa).

A disordered region spans residues 1 to 52 (MNQMQPYADVHQPHMSTAAHAPASGPPAGLSHYSYPHQPSMMQPQQQQHQYG). Residues 18–52 (AAHAPASGPPAGLSHYSYPHQPSMMQPQQQQHQYG) show a composition bias toward low complexity. Positions 124 to 230 (RVTATLWEDE…HDIGALLYHP (107 aa)) constitute an HTH APSES-type domain. The H-T-H motif DNA-binding region spans 158–179 (GTKLLNVAGMTRGRRDGILKSE). A disordered region spans residues 246–645 (VDRNRRPDSM…HTLAAQRARR (400 aa)). 2 stretches are compositionally biased toward polar residues: residues 254-271 (SMQT…SQAP) and 279-288 (MTNSVGSAMS). Over residues 317-330 (SASSMMGMGNQGSS) the composition is skewed to low complexity. Residues 336-365 (ANVQQHPQGNQPLSIDTGLSNARSVPTTPA) are compositionally biased toward polar residues. Over residues 469 to 481 (PYNGNRGPYGYNP) the composition is skewed to low complexity. 2 stretches are compositionally biased toward polar residues: residues 502–542 (SPHQ…NLYN) and 569–584 (YASQ…NSSG). Positions 585–613 (KRGRDEEDAETYRPDSVQGDDMGGLKRRK) are nuclear localization domain. Residues 586–597 (RGRDEEDAETYR) show a composition bias toward basic and acidic residues.

The protein belongs to the EFG1/PHD1/stuA family.

It localises to the nucleus. Functionally, transcription factor that regulates asexual reproduction. Binds the StuA-response elements (StRE) with the consensus sequence 5'-(A/T)CGCG(T/A)N(A/C)-3' at the promoters of target genes. Regulates the expression of several effector genes (AvrLm1, AvrLm6 and AvrLm4-7) during infection stage. This is Cell pattern formation-associated protein stuA from Leptosphaeria maculans (strain JN3 / isolate v23.1.3 / race Av1-4-5-6-7-8) (Blackleg fungus).